The chain runs to 336 residues: Protein RecA (336 aa).

66–73 (GNESSGKT) is an ATP binding site.

The protein belongs to the RecA family.

It localises to the cytoplasm. Its function is as follows. Can catalyze the hydrolysis of ATP in the presence of single-stranded DNA, the ATP-dependent uptake of single-stranded DNA by duplex DNA, and the ATP-dependent hybridization of homologous single-stranded DNAs. It interacts with LexA causing its activation and leading to its autocatalytic cleavage. The chain is Protein RecA from Mycoplasma pneumoniae (strain ATCC 29342 / M129 / Subtype 1) (Mycoplasmoides pneumoniae).